A 119-amino-acid chain; its full sequence is Large ribosomal subunit protein uL22 (119 aa).

The protein belongs to the universal ribosomal protein uL22 family. As to quaternary structure, part of the 50S ribosomal subunit.

This protein binds specifically to 23S rRNA; its binding is stimulated by other ribosomal proteins, e.g. L4, L17, and L20. It is important during the early stages of 50S assembly. It makes multiple contacts with different domains of the 23S rRNA in the assembled 50S subunit and ribosome. Its function is as follows. The globular domain of the protein is located near the polypeptide exit tunnel on the outside of the subunit, while an extended beta-hairpin is found that lines the wall of the exit tunnel in the center of the 70S ribosome. The chain is Large ribosomal subunit protein uL22 from Chlorobium chlorochromatii (strain CaD3).